The chain runs to 781 residues: LPS-assembly protein LptD (781 aa).

An N-terminal signal peptide occupies residues M1–A24.

This sequence belongs to the LptD family. In terms of assembly, component of the lipopolysaccharide transport and assembly complex. Interacts with LptE and LptA.

It is found in the cell outer membrane. Together with LptE, is involved in the assembly of lipopolysaccharide (LPS) at the surface of the outer membrane. The chain is LPS-assembly protein LptD from Histophilus somni (strain 129Pt) (Haemophilus somnus).